We begin with the raw amino-acid sequence, 110 residues long: MEVAAKYKGARLSAQKARLVADQVRGKAVEDALNILTFSPKKAAVVIKKALESAIANAEHNEGLDVDDLRVSTVMVDEGPTLKRIKARAKGRADRIFKRTCHITVKVADK.

It belongs to the universal ribosomal protein uL22 family. In terms of assembly, part of the 50S ribosomal subunit.

In terms of biological role, this protein binds specifically to 23S rRNA; its binding is stimulated by other ribosomal proteins, e.g. L4, L17, and L20. It is important during the early stages of 50S assembly. It makes multiple contacts with different domains of the 23S rRNA in the assembled 50S subunit and ribosome. Its function is as follows. The globular domain of the protein is located near the polypeptide exit tunnel on the outside of the subunit, while an extended beta-hairpin is found that lines the wall of the exit tunnel in the center of the 70S ribosome. The sequence is that of Large ribosomal subunit protein uL22 from Marinobacter nauticus (strain ATCC 700491 / DSM 11845 / VT8) (Marinobacter aquaeolei).